The primary structure comprises 577 residues: Isocitrate dehydrogenase kinase/phosphatase (577 aa).

ATP contacts are provided by residues 318–324 and K339; that span reads APGVRGM. D374 is a catalytic residue.

It belongs to the AceK family.

It is found in the cytoplasm. The catalysed reaction is L-seryl-[isocitrate dehydrogenase] + ATP = O-phospho-L-seryl-[isocitrate dehydrogenase] + ADP + H(+). In terms of biological role, bifunctional enzyme which can phosphorylate or dephosphorylate isocitrate dehydrogenase (IDH) on a specific serine residue. This is a regulatory mechanism which enables bacteria to bypass the Krebs cycle via the glyoxylate shunt in response to the source of carbon. When bacteria are grown on glucose, IDH is fully active and unphosphorylated, but when grown on acetate or ethanol, the activity of IDH declines drastically concomitant with its phosphorylation. This chain is Isocitrate dehydrogenase kinase/phosphatase, found in Pseudomonas aeruginosa (strain ATCC 15692 / DSM 22644 / CIP 104116 / JCM 14847 / LMG 12228 / 1C / PRS 101 / PAO1).